The following is a 379-amino-acid chain: Dihydroflavonol 4-reductase (379 aa).

NADP(+)-binding residues include K56 and Y175.

The protein belongs to the NAD(P)-dependent epimerase/dehydratase family. Dihydroflavonol-4-reductase subfamily. In terms of tissue distribution, expressed in both leaf and hypocotyl tissues.

The enzyme catalyses a (2R,3S,4S)-leucoanthocyanidin + NADP(+) = a (2R,3R)-dihydroflavonol + NADPH + H(+). It carries out the reaction (2S)-flavan-4-ol + NADP(+) = (2S)-flavanone + NADPH + H(+). It participates in pigment biosynthesis; anthocyanin biosynthesis. In terms of biological role, bifunctional enzyme involved in flavonoid metabolism. The protein is Dihydroflavonol 4-reductase of Solanum lycopersicum (Tomato).